A 130-amino-acid polypeptide reads, in one-letter code: 3-aminoacrylate deaminase RutC (130 aa).

The protein belongs to the RutC family.

The catalysed reaction is (Z)-3-aminoacrylate + H2O + H(+) = 3-oxopropanoate + NH4(+). In terms of biological role, involved in pyrimidine catabolism. Catalyzes the deamination of 3-aminoacrylate to malonic semialdehyde, a reaction that can also occur spontaneously. RutC may facilitate the reaction and modulate the metabolic fitness, rather than catalyzing essential functions. This is 3-aminoacrylate deaminase RutC from Klebsiella variicola (strain At-22).